Here is a 1146-residue protein sequence, read N- to C-terminus: Pol polyprotein (1146 aa).

Residues 13 to 77 form a disordered region; it reads SKKREARGSR…GSSRGSQPGQ (65 aa). Over residues 29–41 the composition is skewed to polar residues; sequence FPDTTEESAQQIC. A compositionally biased stretch (basic and acidic residues) spans 45–59; sequence DSSDSKSVPRSERNK. Polar residues predominate over residues 66–76; sequence GEGSSRGSQPG. Positions 100–174 constitute a Peptidase A2 domain; sequence LNVLLDTGAD…IPVTILGRDI (75 aa). Aspartate 105 is a catalytic residue. The region spanning 230–419 is the Reverse transcriptase domain; sequence EGKISEASDN…PPYSWLGYQL (190 aa). Positions 617–740 constitute an RNase H type-1 domain; that stretch reads PTSGITIYTD…ADEAAKIKEE (124 aa). The Integrase-type zinc-finger motif lies at 878–919; that stretch reads ENIQEAQDEHENWHTSPKILARNYKIPLTVAKQITQECPHCT. Zn(2+)-binding residues include histidine 887, histidine 891, cysteine 915, and cysteine 918. Residues 921-1078 enclose the Integrase catalytic domain; it reads QGSGPAGCVM…TPWEVFITNQ (158 aa). The segment at residues 1096–1144 is a DNA-binding region (integrase-type); that stretch reads KFCFYKIPGEHDWKGPTRVLWKGDGAVVVNDEGKGIIAVPLTRTKLLIK.

The protein belongs to the retroviral Pol polyprotein family. Specific enzymatic cleavages in vivo yield mature proteins.

The catalysed reaction is Endohydrolysis of RNA in RNA/DNA hybrids. Three different cleavage modes: 1. sequence-specific internal cleavage of RNA. Human immunodeficiency virus type 1 and Moloney murine leukemia virus enzymes prefer to cleave the RNA strand one nucleotide away from the RNA-DNA junction. 2. RNA 5'-end directed cleavage 13-19 nucleotides from the RNA end. 3. DNA 3'-end directed cleavage 15-20 nucleotides away from the primer terminus.. The enzyme catalyses 3'-end directed exonucleolytic cleavage of viral RNA-DNA hybrid.. It catalyses the reaction DNA(n) + a 2'-deoxyribonucleoside 5'-triphosphate = DNA(n+1) + diphosphate. During replicative cycle of retroviruses, the reverse-transcribed viral DNA is integrated into the host chromosome by the viral integrase enzyme. RNase H activity is associated with the reverse transcriptase. The sequence is that of Pol polyprotein (pol) from Equus asinus (Donkey).